The following is a 678-amino-acid chain: DNA ligase (678 aa).

NAD(+)-binding positions include aspartate 47 to aspartate 51, serine 96 to leucine 97, and glutamate 122. The active-site N6-AMP-lysine intermediate is lysine 124. Arginine 145, glutamate 182, lysine 300, and lysine 324 together coordinate NAD(+). Residues cysteine 418, cysteine 421, cysteine 436, and cysteine 442 each contribute to the Zn(2+) site. The BRCT domain occupies alanine 602 to leucine 678.

The protein belongs to the NAD-dependent DNA ligase family. LigA subfamily. Requires Mg(2+) as cofactor. Mn(2+) is required as a cofactor.

The enzyme catalyses NAD(+) + (deoxyribonucleotide)n-3'-hydroxyl + 5'-phospho-(deoxyribonucleotide)m = (deoxyribonucleotide)n+m + AMP + beta-nicotinamide D-nucleotide.. DNA ligase that catalyzes the formation of phosphodiester linkages between 5'-phosphoryl and 3'-hydroxyl groups in double-stranded DNA using NAD as a coenzyme and as the energy source for the reaction. It is essential for DNA replication and repair of damaged DNA. This is DNA ligase from Francisella tularensis subsp. holarctica (strain LVS).